Here is a 3563-residue protein sequence, read N- to C-terminus: D-lysergyl-peptide-synthetase subunit 1 (3563 aa).

The tract at residues 307-706 is adenylation (A) domain 1; that stretch reads SCSPRPNPQA…LGRKDDQVKI (400 aa). A Carrier 1 domain is found at 844–921; it reads EPKSDREKLL…EIVIVSTSAT (78 aa). An O-(pantetheine 4'-phosphoryl)serine modification is found at S881. Positions 963 to 1354 are condensation (C) domain 1; it reads EDIYPCTHLQ…EHILTEIHSN (392 aa). The interval 1397–1804 is adenylation (A) domain 2; the sequence is QEKCQAQPDA…RRKDAQVKIR (408 aa). In terms of domain architecture, Carrier 2 spans 1944–2020; that stretch reads PPSNATEHEI…KLALARGVTQ (77 aa). The residue at position 1981 (S1981) is an O-(pantetheine 4'-phosphoryl)serine. Residues 2067 to 2486 form a condensation (C) domain 2 region; that stretch reads ERIYPCSPIQ…ALPVLDEDQM (420 aa). The adenylation (A) domain 3 stretch occupies residues 2511 to 2909; sequence QCIRCPDSPS…GRNDDQVKVR (399 aa). Residues 3025–3104 enclose the Carrier 3 domain; sequence PPRTALEAEL…RFGSYRRAGA (80 aa). O-(pantetheine 4'-phosphoryl)serine is present on S3064. The interval 3166–3451 is cyclization (Cyc) domain; that stretch reads LYFSKPMASE…VAKSTTWSSD (286 aa).

It belongs to the NRP synthetase family.

The protein operates within alkaloid biosynthesis; ergot alkaloid biosynthesis. Functionally, D-lysergyl-peptide-synthetase subunit 1; part of the gene cluster that mediates the biosynthesis of fungal ergot alkaloid. DmaW catalyzes the first step of ergot alkaloid biosynthesis by condensing dimethylallyl diphosphate (DMAP) and tryptophan to form 4-dimethylallyl-L-tryptophan. The second step is catalyzed by the methyltransferase easF that methylates 4-dimethylallyl-L-tryptophan in the presence of S-adenosyl-L-methionine, resulting in the formation of 4-dimethylallyl-L-abrine. The catalase easC and the FAD-dependent oxidoreductase easE then transform 4-dimethylallyl-L-abrine to chanoclavine-I which is further oxidized by easD in the presence of NAD(+), resulting in the formation of chanoclavine-I aldehyde. Agroclavine dehydrogenase easG then mediates the conversion of chanoclavine-I aldehyde to agroclavine via a non-enzymatic adduct reaction: the substrate is an iminium intermediate that is formed spontaneously from chanoclavine-I aldehyde in the presence of glutathione. The presence of easA is not required to complete this reaction. Further conversion of agroclavine to paspalic acid is a two-step process involving oxidation of agroclavine to elymoclavine and of elymoclavine to paspalic acid, the second step being performed by the elymoclavine oxidase cloA. Paspalic acid is then further converted to D-lysergic acid. Ergopeptines are assembled from D-lysergic acid and three different amino acids by the D-lysergyl-peptide-synthetases composed each of a monomudular and a trimodular nonribosomal peptide synthetase subunit. LpsB and lpsC encode the monomodular subunits responsible for D-lysergic acid activation and incorporation into the ergopeptine backbone. LpsA1 and A2 subunits encode the trimodular nonribosomal peptide synthetase assembling the tripeptide portion of ergopeptines. LpsA1 is responsible for formation of the major ergopeptine, ergotamine, and lpsA2 for alpha-ergocryptine, the minor ergopeptine of the total alkaloid mixture elaborated by C.purpurea. D-lysergyl-tripeptides are assembled by the nonribosomal peptide synthetases and released as N-(D-lysergyl-aminoacyl)-lactams. Cyclolization of the D-lysergyl-tripeptides is performed by the Fe(2+)/2-ketoglutarate-dependent dioxygenase easH which introduces a hydroxyl group into N-(D-lysergyl-aminoacyl)-lactam at alpha-C of the aminoacyl residue followed by spontaneous condensation with the terminal lactam carbonyl group. The polypeptide is D-lysergyl-peptide-synthetase subunit 1 (Claviceps purpurea (Ergot fungus)).